We begin with the raw amino-acid sequence, 102 residues long: ATP-dependent Clp protease adapter protein ClpS (102 aa).

It belongs to the ClpS family. In terms of assembly, binds to the N-terminal domain of the chaperone ClpA.

Functionally, involved in the modulation of the specificity of the ClpAP-mediated ATP-dependent protein degradation. In Shewanella loihica (strain ATCC BAA-1088 / PV-4), this protein is ATP-dependent Clp protease adapter protein ClpS.